The primary structure comprises 290 residues: tRNA dimethylallyltransferase (290 aa).

An ATP-binding site is contributed by 9-16 (GPTASGKT). 11–16 (TASGKT) serves as a coordination point for substrate. An interaction with substrate tRNA region spans residues 34-37 (DSTQ).

The protein belongs to the IPP transferase family. Monomer. The cofactor is Mg(2+).

It carries out the reaction adenosine(37) in tRNA + dimethylallyl diphosphate = N(6)-dimethylallyladenosine(37) in tRNA + diphosphate. Catalyzes the transfer of a dimethylallyl group onto the adenine at position 37 in tRNAs that read codons beginning with uridine, leading to the formation of N6-(dimethylallyl)adenosine (i(6)A). This Phytoplasma australiense protein is tRNA dimethylallyltransferase.